The sequence spans 230 residues: Enolase-phosphatase E1 (230 aa).

It belongs to the HAD-like hydrolase superfamily. MasA/MtnC family. In terms of assembly, monomer. Mg(2+) is required as a cofactor.

It catalyses the reaction 5-methylsulfanyl-2,3-dioxopentyl phosphate + H2O = 1,2-dihydroxy-5-(methylsulfanyl)pent-1-en-3-one + phosphate. It functions in the pathway amino-acid biosynthesis; L-methionine biosynthesis via salvage pathway; L-methionine from S-methyl-5-thio-alpha-D-ribose 1-phosphate: step 3/6. The protein operates within amino-acid biosynthesis; L-methionine biosynthesis via salvage pathway; L-methionine from S-methyl-5-thio-alpha-D-ribose 1-phosphate: step 4/6. In terms of biological role, bifunctional enzyme that catalyzes the enolization of 2,3-diketo-5-methylthiopentyl-1-phosphate (DK-MTP-1-P) into the intermediate 2-hydroxy-3-keto-5-methylthiopentenyl-1-phosphate (HK-MTPenyl-1-P), which is then dephosphorylated to form the acireductone 1,2-dihydroxy-3-keto-5-methylthiopentene (DHK-MTPene). This chain is Enolase-phosphatase E1, found in Sulfurihydrogenibium sp. (strain YO3AOP1).